Here is a 210-residue protein sequence, read N- to C-terminus: DNA-directed RNA polymerases I, II, and III subunit RPABC1 (210 aa).

Met1 is modified (N-acetylmethionine). A Glycyl lysine isopeptide (Lys-Gly) (interchain with G-Cter in SUMO2) cross-link involves residue Lys81.

Belongs to the archaeal Rpo5/eukaryotic RPB5 RNA polymerase subunit family. As to quaternary structure, component of the RNA polymerase I (Pol I), RNA polymerase II (Pol II) and RNA polymerase III (Pol III) complexes consisting of at least 13, 12 and 17 subunits, respectively. Pol I complex consists of a ten-subunit catalytic core composed of POLR1A/RPA1, POLR1B/RPA2, POLR1C/RPAC1, POLR1D/RPAC2, POLR1H/RPA12, POLR2E/RPABC1, POLR2F/RPABC2, POLR2H/RPABC3, POLR2K/RPABC4 and POLR2L/RPABC5; a mobile stalk subunit POLR1F/RPA43 protruding from the core and additional subunits homologous to general transcription factors POLR1E/RPA49 and POLR1G/RPA34. Part of Pol I pre-initiation complex (PIC), in which Pol I core assembles with RRN3 and promoter-bound UTBF and SL1/TIF-IB complex. Pol II complex contains a ten-subunit catalytic core composed of POLR2A/RPB1, POLR2B/RPB2, POLR2C/RPB3, POLR2I/RPB9, POLR2J/RPB11, POLR2E/RPABC1, POLR2F/RPABC2, POLR2H/RPABC3, POLR2K/RPABC4 and POLR2L/RPABC5 and a mobile stalk composed of two subunits POLR2D/RPB4 and POLR2G/RPB7. Part of Pol II(G) complex, in which Pol II core associates with an additional subunit POLR2M; unlike conventional Pol II, Pol II(G) functions as a transcriptional repressor. Part of TBP-based Pol II pre-initiation complex (PIC), in which Pol II core assembles with general transcription factors and other specific initiation factors including GTF2E1, GTF2E2, GTF2F1, GTF2F2, TCEA1, ERCC2, ERCC3, GTF2H2, GTF2H3, GTF2H4, GTF2H5, GTF2A1, GTF2A2, GTF2B and TBP; this large multi-subunit PIC complex mediates DNA unwinding and targets Pol II core to the transcription start site where the first phosphodiester bond forms. In Pol II complex, this subunit is present in 2-fold molar excess over the other subunits. Pol III complex consists of a ten-subunit catalytic core composed of POLR3A/RPC1, POLR3B/RPC2, POLR1C/RPAC1, POLR1D/RPAC2, POLR3K/RPC10, POLR2E/RPABC1, POLR2F/RPABC2, POLR2H/RPABC3, POLR2K/RPABC4 and POLR2L/RPABC5; a mobile stalk composed of two subunits POLR3H/RPC8 and CRCP/RPC9, protruding from the core and functioning primarily in transcription initiation; and additional subunits homologous to general transcription factors of the RNA polymerase II machinery, POLR3C/RPC3-POLR3F/RPC6-POLR3G/RPC7 heterotrimer required for transcription initiation and POLR3D/RPC4-POLR3E/RPC5 heterodimer involved in both transcription initiation and termination. Component of the PAQosome complex which is responsible for the biogenesis of several protein complexes and which consists of R2TP complex members RUVBL1, RUVBL2, RPAP3 and PIH1D1, URI complex members PFDN2, PFDN6, PDRG1, UXT and URI1 as well as ASDURF, POLR2E and DNAAF10/WDR92. Interacts with URI1.

It is found in the nucleus. It localises to the nucleolus. In terms of biological role, DNA-dependent RNA polymerase catalyzes the transcription of DNA into RNA using the four ribonucleoside triphosphates as substrates. Common component of RNA polymerases I, II and III which synthesize ribosomal RNA precursors, mRNA precursors and many functional non-coding RNAs, and small RNAs, such as 5S rRNA and tRNAs, respectively. Pol II is the central component of the basal RNA polymerase II transcription machinery. Pols are composed of mobile elements that move relative to each other. In Pol II, POLR2E/RPABC1 is part of the lower jaw surrounding the central large cleft and thought to grab the incoming DNA template. Seems to be the major component in this process. The sequence is that of DNA-directed RNA polymerases I, II, and III subunit RPABC1 from Mus musculus (Mouse).